Here is a 168-residue protein sequence, read N- to C-terminus: Lipoprotein signal peptidase (168 aa).

A run of 4 helical transmembrane segments spans residues 15-35 (WLWLAILVFIADIGIKLVVMD), 47-67 (VLPFFNLLYVHNYGAAFSFLS), 75-95 (WLFTGIAFVVTGLLTYWMSKL), and 107-127 (ALIIGGAVGNVFDRVVHGFVV). Catalysis depends on residues D128 and D146. The chain crosses the membrane as a helical span at residues 141 to 161 (AFNLADTTICIGAAMIILDGF).

The protein belongs to the peptidase A8 family.

It is found in the cell inner membrane. The catalysed reaction is Release of signal peptides from bacterial membrane prolipoproteins. Hydrolyzes -Xaa-Yaa-Zaa-|-(S,diacylglyceryl)Cys-, in which Xaa is hydrophobic (preferably Leu), and Yaa (Ala or Ser) and Zaa (Gly or Ala) have small, neutral side chains.. Its pathway is protein modification; lipoprotein biosynthesis (signal peptide cleavage). Functionally, this protein specifically catalyzes the removal of signal peptides from prolipoproteins. The chain is Lipoprotein signal peptidase from Vibrio campbellii (strain ATCC BAA-1116).